The primary structure comprises 50 residues: MIVLPRKYGKASRKCSRCGDHSALVRRYGLMLCRQCFRELAPKIGFKKYN.

Zn(2+) is bound by residues Cys15, Cys18, Cys33, and Cys36.

This sequence belongs to the universal ribosomal protein uS14 family. Zinc-binding uS14 subfamily. In terms of assembly, part of the 30S ribosomal subunit. Zn(2+) serves as cofactor.

Its function is as follows. Binds 16S rRNA, required for the assembly of 30S particles. The sequence is that of Small ribosomal subunit protein uS14 from Methanothermobacter thermautotrophicus (strain ATCC 29096 / DSM 1053 / JCM 10044 / NBRC 100330 / Delta H) (Methanobacterium thermoautotrophicum).